We begin with the raw amino-acid sequence, 126 residues long: Small ribosomal subunit protein uS13 (126 aa).

The tract at residues 96-126 is disordered; the sequence is LPVRGQQTKTNARTRKGRRKGTVANKKKVSK. Basic residues predominate over residues 107-126; sequence ARTRKGRRKGTVANKKKVSK.

Belongs to the universal ribosomal protein uS13 family. In terms of assembly, part of the 30S ribosomal subunit. Forms a loose heterodimer with protein S19. Forms two bridges to the 50S subunit in the 70S ribosome.

In terms of biological role, located at the top of the head of the 30S subunit, it contacts several helices of the 16S rRNA. In the 70S ribosome it contacts the 23S rRNA (bridge B1a) and protein L5 of the 50S subunit (bridge B1b), connecting the 2 subunits; these bridges are implicated in subunit movement. Contacts the tRNAs in the A and P-sites. This Hydrogenobaculum sp. (strain Y04AAS1) protein is Small ribosomal subunit protein uS13.